Reading from the N-terminus, the 1030-residue chain is Subtilin biosynthesis protein SpaB (1030 aa).

This sequence to S.epidermidis EpiB and L.lactis NisB.

The protein resides in the cell membrane. Its function is as follows. Involved in the post-translational modification of the lantibiotic subtilin. This Bacillus subtilis protein is Subtilin biosynthesis protein SpaB (spaB).